Reading from the N-terminus, the 411-residue chain is Secretion apparatus protein BsaZ (411 aa).

4 helical membrane passes run 28-48, 80-100, 137-157, and 175-195; these read IVALIVIATGALAAPALVDLT, IAAPFVLLCAAAGALPSLVQS, ALLYVGVFALTVRVFAGLYHA, and IVLTVRLVLLFLLCALPVLIL. The disordered stretch occupies residues 341–411; the sequence is AANRGGPPPE…APARTGDQNA (71 aa). The span at 370 to 404 shows a compositional bias: low complexity; sequence DACADNAFPDDAPPGAAAPNAGSPDGPAPDGGAPA.

This sequence belongs to the type III secretion exporter family.

It is found in the cell membrane. Part of the bsa type III secretion system, is involved in the intracellular replication of invading bacteria inside the host cell. Probably necessary for the lysis of the vacuole membrane and escape into the host cell cytoplasm. This is Secretion apparatus protein BsaZ (bsaZ) from Burkholderia pseudomallei (strain 1026b).